A 339-amino-acid chain; its full sequence is Anthranilate phosphoribosyltransferase (339 aa).

5-phospho-alpha-D-ribose 1-diphosphate is bound by residues glycine 82, 85-86, threonine 90, 92-95, and 110-118; these read GD, NIST, and KHGNRAVSS. Glycine 82 contributes to the anthranilate binding site. Serine 94 provides a ligand contact to Mg(2+). 2 residues coordinate anthranilate: asparagine 113 and arginine 168. Residues aspartate 227 and glutamate 228 each contribute to the Mg(2+) site.

Belongs to the anthranilate phosphoribosyltransferase family. Homodimer. The cofactor is Mg(2+).

The enzyme catalyses N-(5-phospho-beta-D-ribosyl)anthranilate + diphosphate = 5-phospho-alpha-D-ribose 1-diphosphate + anthranilate. The protein operates within amino-acid biosynthesis; L-tryptophan biosynthesis; L-tryptophan from chorismate: step 2/5. In terms of biological role, catalyzes the transfer of the phosphoribosyl group of 5-phosphorylribose-1-pyrophosphate (PRPP) to anthranilate to yield N-(5'-phosphoribosyl)-anthranilate (PRA). The protein is Anthranilate phosphoribosyltransferase of Clostridium beijerinckii (strain ATCC 51743 / NCIMB 8052) (Clostridium acetobutylicum).